The following is a 218-amino-acid chain: Octanoyltransferase (218 aa).

In terms of domain architecture, BPL/LPL catalytic spans 45 to 218 (AGTADELWLL…TDALQRAIYS (174 aa)). Residues 84-91 (RGGQITYH), 151-153 (ALG), and 164-166 (GLA) contribute to the substrate site. The Acyl-thioester intermediate role is filled by Cys-182.

The protein belongs to the LipB family.

It is found in the cytoplasm. The enzyme catalyses octanoyl-[ACP] + L-lysyl-[protein] = N(6)-octanoyl-L-lysyl-[protein] + holo-[ACP] + H(+). It participates in protein modification; protein lipoylation via endogenous pathway; protein N(6)-(lipoyl)lysine from octanoyl-[acyl-carrier-protein]: step 1/2. Functionally, catalyzes the transfer of endogenously produced octanoic acid from octanoyl-acyl-carrier-protein onto the lipoyl domains of lipoate-dependent enzymes. Lipoyl-ACP can also act as a substrate although octanoyl-ACP is likely to be the physiological substrate. The protein is Octanoyltransferase of Thiobacillus denitrificans (strain ATCC 25259 / T1).